A 155-amino-acid chain; its full sequence is MSRRGTAEEKTAKSDPIYRNRLVNMLVNRILKHGKKSLAYQIIYRAVKKIQQKTETNPLSVLRQAIRGVTPDIAVKARRVGGSTHQVPIEIGSTQGKALAIRWLLGASRKRPGRNMAFKLSSELVDAAKGSGDSIRKKEETHRMAEANRAFAHFR.

This sequence belongs to the universal ribosomal protein uS7 family. Part of the 30S ribosomal subunit.

It is found in the plastid. The protein localises to the chloroplast. One of the primary rRNA binding proteins, it binds directly to 16S rRNA where it nucleates assembly of the head domain of the 30S subunit. In Canella winterana (Wild cinnamon), this protein is Small ribosomal subunit protein uS7c (rps7).